We begin with the raw amino-acid sequence, 761 residues long: uncharacterized protein (761 aa).

Residues 1 to 84 (MIVKCPICDG…CGGSGKVVKC (84 aa)) form a CR-type zinc finger. Residues 135–200 (GKFYKGVVTR…EKREIDFKYI (66 aa)) enclose the S1 motif domain.

This is an uncharacterized protein from Methanocaldococcus jannaschii (strain ATCC 43067 / DSM 2661 / JAL-1 / JCM 10045 / NBRC 100440) (Methanococcus jannaschii).